The following is a 420-amino-acid chain: Glycogen synthase kinase-3 beta (420 aa).

The segment covering 1–22 (MSGRPRTTSFAESCKPVQQPSA) has biased composition (polar residues). Residues 1–35 (MSGRPRTTSFAESCKPVQQPSAFGSMKVSRDKDGS) form a disordered region. A Phosphoserine; by PKB/AKT1, RPS6KA3 and SGK3 modification is found at Ser9. The S-palmitoyl cysteine moiety is linked to residue Cys14. The region spanning 56 to 340 (YTDTKVIGNG…PLEACAHSFF (285 aa)) is the Protein kinase domain. ATP is bound by residues 62-70 (IGNGSFGVV) and Lys85. Asp181 acts as the Proton acceptor in catalysis. Tyr216 carries the phosphotyrosine modification. 2 stretches are compositionally biased toward low complexity: residues 387 to 401 (AAST…SDAN) and 409 to 420 (NNAAFASASNST). Residues 387 to 420 (AASTPTNATAASDANAGDRGQTNNAAFASASNST) form a disordered region. Phosphoserine is present on Ser389. A Phosphothreonine modification is found at Thr390.

This sequence belongs to the protein kinase superfamily. CMGC Ser/Thr protein kinase family. GSK-3 subfamily. In terms of assembly, monomer. Interacts with DAB2IP (via C2 domain); the interaction stimulates GSK3B kinase activation. Interacts (via C2 domain) with PPP2CA. Interacts with ARRB2, AXIN1, CABYR, DISC1, MMP2, MUC1, NIN, PRUNE1 and ZBED3. Interacts with AXIN1; the interaction mediates hyperphosphorylation of CTNNB1 leading to its ubiquitination and destruction. Interacts with and phosphorylates SNAI1. Interacts with DNM1L (via a C-terminal domain). Found in a complex composed of MACF1, APC, AXIN1, CTNNB1 and GSK3B. Interacts with SGK3. Interacts with the CLOCK-BMAL1 heterodimer. Interacts with the BMAL1. Interacts with CTNND2. The complex composed, at least, of APC, CTNNB1 and GSK3B interacts with JPT1; the interaction requires the inactive form of GSK3B (phosphorylated at 'Ser-9'). Forms a complex composed of PRKAR2A or PRKAR2B, GSK3B and GSKIP through GSKIP interaction; facilitates PKA-induced phosphorylation and regulates GSK3B activity. Interacts with GSKIP. Interacts with GID8. Interacts with PIWIL2. Interacts with LMBR1L. Interacts with DDX3X. Interacts with BIRC2. Interacts with TNFRSF10B; TNFRSF10B stimulation inhibits GSK3B kinase activity. Found in a complex with SLC39A6, SLC39A10 and with GSK3B that controls NCAM1 phosphorylation. Interacts with PKP3 (via ARM repeats); the interaction may be involved in PKP3 protein degradation. Phosphorylated by AKT1 and ILK1. Upon insulin-mediated signaling, the activated PKB/AKT1 and RPS6KA3 protein kinases phosphorylate and deactivate GSK3B, resulting in the dephosphorylation and activation of GYS1. Activated by phosphorylation at Tyr-216. Inactivated by phosphorylation at Ser-9. Post-translationally, mono-ADP-ribosylation by PARP10 negatively regulates kinase activity. In terms of processing, palmitoylated. Palmitoylation by ZDHHC4 prevents AKT1-mediated phosphorylation.

The protein resides in the cytoplasm. Its subcellular location is the nucleus. The protein localises to the cell membrane. The enzyme catalyses L-seryl-[tau protein] + ATP = O-phospho-L-seryl-[tau protein] + ADP + H(+). It carries out the reaction L-threonyl-[tau protein] + ATP = O-phospho-L-threonyl-[tau protein] + ADP + H(+). It catalyses the reaction L-seryl-[protein] + ATP = O-phospho-L-seryl-[protein] + ADP + H(+). The catalysed reaction is L-threonyl-[protein] + ATP = O-phospho-L-threonyl-[protein] + ADP + H(+). With respect to regulation, activated by phosphorylation at Tyr-216. In response to insulin, inhibited by phosphorylation at Ser-9 by PKB/AKT1; phosphorylation at this site causes a conformational change, preventing access of substrates to the active site. Inhibited by IL22 treatment which also triggers phosphorylation at Ser-9, promoting inactivation. Inhibited by lithium. Functionally, constitutively active protein kinase that acts as a negative regulator in the hormonal control of glucose homeostasis, Wnt signaling and regulation of transcription factors and microtubules, by phosphorylating and inactivating glycogen synthase (GYS1 or GYS2), EIF2B, CTNNB1/beta-catenin, APC, AXIN1, DPYSL2/CRMP2, JUN, NFATC1/NFATC, MAPT/TAU and MACF1. Requires primed phosphorylation of the majority of its substrates. In skeletal muscle, contributes to insulin regulation of glycogen synthesis by phosphorylating and inhibiting GYS1 activity and hence glycogen synthesis. May also mediate the development of insulin resistance by regulating activation of transcription factors. Regulates protein synthesis by controlling the activity of initiation factor 2B (EIF2BE/EIF2B5) in the same manner as glycogen synthase. In Wnt signaling, GSK3B forms a multimeric complex with APC, AXIN1 and CTNNB1/beta-catenin and phosphorylates the N-terminus of CTNNB1 leading to its degradation mediated by ubiquitin/proteasomes. Phosphorylates JUN at sites proximal to its DNA-binding domain, thereby reducing its affinity for DNA. Phosphorylates NFATC1/NFATC on conserved serine residues promoting NFATC1/NFATC nuclear export, shutting off NFATC1/NFATC gene regulation, and thereby opposing the action of calcineurin. Phosphorylates MAPT/TAU on 'Thr-548', decreasing significantly MAPT/TAU ability to bind and stabilize microtubules. MAPT/TAU is the principal component of neurofibrillary tangles in Alzheimer disease. Plays an important role in ERBB2-dependent stabilization of microtubules at the cell cortex. Phosphorylates MACF1, inhibiting its binding to microtubules which is critical for its role in bulge stem cell migration and skin wound repair. Probably regulates NF-kappa-B (NFKB1) at the transcriptional level and is required for the NF-kappa-B-mediated anti-apoptotic response to TNF-alpha (TNF/TNFA). Negatively regulates replication in pancreatic beta-cells, resulting in apoptosis, loss of beta-cells and diabetes. Through phosphorylation of the anti-apoptotic protein MCL1, may control cell apoptosis in response to growth factors deprivation. Phosphorylates MUC1 in breast cancer cells, decreasing the interaction of MUC1 with CTNNB1/beta-catenin. Is necessary for the establishment of neuronal polarity and axon outgrowth. Phosphorylates MARK2, leading to inhibition of its activity. Phosphorylates SIK1 at 'Thr-182', leading to sustainment of its activity. Phosphorylates ZC3HAV1 which enhances its antiviral activity. Phosphorylates SNAI1, leading to its ubiquitination and proteasomal degradation. Phosphorylates SFPQ at 'Thr-687' upon T-cell activation. Phosphorylates NR1D1 st 'Ser-55' and 'Ser-59' and stabilizes it by protecting it from proteasomal degradation. Regulates the circadian clock via phosphorylation of the major clock components including BMAL1, CLOCK and PER2. Phosphorylates CLOCK AT 'Ser-427' and targets it for proteasomal degradation. Phosphorylates BMAL1 at 'Ser-17' and 'Ser-21' and primes it for ubiquitination and proteasomal degradation. Phosphorylates FBXL2 at 'Thr-404' and primes it for ubiquitination by the SCF(FBXO3) complex and proteasomal degradation. Phosphorylates OGT at 'Ser-3' or 'Ser-4' which positively regulates its activity. Phosphorylates MYCN in neuroblastoma cells which may promote its degradation. Regulates the circadian rhythmicity of hippocampal long-term potentiation and BMAL1 and PER2 expression. Acts as a regulator of autophagy by mediating phosphorylation of KAT5/TIP60 under starvation conditions, activating KAT5/TIP60 acetyltransferase activity and promoting acetylation of key autophagy regulators, such as ULK1 and RUBCNL/Pacer. Negatively regulates extrinsic apoptotic signaling pathway via death domain receptors. Promotes the formation of an anti-apoptotic complex, made of DDX3X, BRIC2 and GSK3B, at death receptors, including TNFRSF10B. The anti-apoptotic function is most effective with weak apoptotic signals and can be overcome by stronger stimulation. Phosphorylates E2F1, promoting the interaction between E2F1 and USP11, stabilizing E2F1 and promoting its activity. Phosphorylates mTORC2 complex component RICTOR at 'Ser-1235' in response to endoplasmic stress, inhibiting mTORC2. Phosphorylates FXR1, promoting FXR1 ubiquitination by the SCF(FBXO4) complex and FXR1 degradation by the proteasome. Phosphorylates interleukin-22 receptor subunit IL22RA1, preventing its proteasomal degradation. The protein is Glycogen synthase kinase-3 beta of Spermophilus citellus (European ground squirrel).